We begin with the raw amino-acid sequence, 759 residues long: Phosphoribosylformylglycinamidine synthase subunit PurL (759 aa).

His46 is an active-site residue. Positions 49 and 88 each coordinate ATP. Glu90 lines the Mg(2+) pocket. Substrate-binding positions include 91-94 (SHNH) and Arg113. His92 (proton acceptor) is an active-site residue. A Mg(2+)-binding site is contributed by Asp114. Residue Gln237 coordinates substrate. Position 265 (Asp265) interacts with Mg(2+). 309 to 311 (ESQ) lines the substrate pocket. Positions 498 and 535 each coordinate ATP. Asn536 lines the Mg(2+) pocket. A substrate-binding site is contributed by Ser538.

It belongs to the FGAMS family. In terms of assembly, monomer. Part of the FGAM synthase complex composed of 1 PurL, 1 PurQ and 2 PurS subunits.

It is found in the cytoplasm. The enzyme catalyses N(2)-formyl-N(1)-(5-phospho-beta-D-ribosyl)glycinamide + L-glutamine + ATP + H2O = 2-formamido-N(1)-(5-O-phospho-beta-D-ribosyl)acetamidine + L-glutamate + ADP + phosphate + H(+). It functions in the pathway purine metabolism; IMP biosynthesis via de novo pathway; 5-amino-1-(5-phospho-D-ribosyl)imidazole from N(2)-formyl-N(1)-(5-phospho-D-ribosyl)glycinamide: step 1/2. Part of the phosphoribosylformylglycinamidine synthase complex involved in the purines biosynthetic pathway. Catalyzes the ATP-dependent conversion of formylglycinamide ribonucleotide (FGAR) and glutamine to yield formylglycinamidine ribonucleotide (FGAM) and glutamate. The FGAM synthase complex is composed of three subunits. PurQ produces an ammonia molecule by converting glutamine to glutamate. PurL transfers the ammonia molecule to FGAR to form FGAM in an ATP-dependent manner. PurS interacts with PurQ and PurL and is thought to assist in the transfer of the ammonia molecule from PurQ to PurL. This chain is Phosphoribosylformylglycinamidine synthase subunit PurL, found in Anaeromyxobacter dehalogenans (strain 2CP-1 / ATCC BAA-258).